Here is a 270-residue protein sequence, read N- to C-terminus: uncharacterized protein (270 aa).

The N-terminal stretch at 1-22 (MEYIKKIALYMSVLLLIIFIGG) is a signal peptide. Cys23 carries the N-palmitoyl cysteine lipid modification. The S-diacylglycerol cysteine moiety is linked to residue Cys23.

It belongs to the staphylococcal tandem lipoprotein family.

The protein localises to the cell membrane. This is an uncharacterized protein from Staphylococcus aureus (strain NCTC 8325 / PS 47).